The following is a 379-amino-acid chain: Cytochrome b (379 aa).

Transmembrane regions (helical) follow at residues 33–53, 77–98, 113–133, and 178–198; these read FGSL…FLAM, WLIR…FIHV, WNIG…GYVL, and FFAF…VHLL. The heme b site is built by His83 and His97. Residues His182 and His196 each contribute to the heme b site. His201 contributes to the a ubiquinone binding site. The next 4 membrane-spanning stretches (helical) occupy residues 226–246, 288–308, 320–340, and 347–367; these read IKDL…ALFF, LGGV…PLLN, ITQI…WIGG, and FTMI…ILMP.

This sequence belongs to the cytochrome b family. In terms of assembly, the cytochrome bc1 complex contains 11 subunits: 3 respiratory subunits (MT-CYB, CYC1 and UQCRFS1), 2 core proteins (UQCRC1 and UQCRC2) and 6 low-molecular weight proteins (UQCRH/QCR6, UQCRB/QCR7, UQCRQ/QCR8, UQCR10/QCR9, UQCR11/QCR10 and a cleavage product of UQCRFS1). This cytochrome bc1 complex then forms a dimer. Heme b serves as cofactor.

Its subcellular location is the mitochondrion inner membrane. Functionally, component of the ubiquinol-cytochrome c reductase complex (complex III or cytochrome b-c1 complex) that is part of the mitochondrial respiratory chain. The b-c1 complex mediates electron transfer from ubiquinol to cytochrome c. Contributes to the generation of a proton gradient across the mitochondrial membrane that is then used for ATP synthesis. The sequence is that of Cytochrome b (MT-CYB) from Akodon dayi (Day's grass mouse).